The chain runs to 306 residues: Porphobilinogen deaminase (306 aa).

An S-(dipyrrolylmethanemethyl)cysteine modification is found at cysteine 237.

This sequence belongs to the HMBS family. In terms of assembly, monomer. Dipyrromethane is required as a cofactor.

The catalysed reaction is 4 porphobilinogen + H2O = hydroxymethylbilane + 4 NH4(+). It participates in porphyrin-containing compound metabolism; protoporphyrin-IX biosynthesis; coproporphyrinogen-III from 5-aminolevulinate: step 2/4. Functionally, tetrapolymerization of the monopyrrole PBG into the hydroxymethylbilane pre-uroporphyrinogen in several discrete steps. This Syntrophus aciditrophicus (strain SB) protein is Porphobilinogen deaminase.